We begin with the raw amino-acid sequence, 630 residues long: Plastin-1 (630 aa).

Met1 bears the N-acetylmethionine mark. EF-hand domains follow at residues 11-46 and 51-86; these read EELE…ASLP and KVRE…LKSK. Residues Asp24, Asp26, Ser28, Tyr30, Glu35, Asp64, Asn66, Asp68, Arg70, and Glu75 each contribute to the Ca(2+) site. Actin-binding regions lie at residues 108–381 and 382–626; these read TSSI…GLHK and PDNN…GKGL. Calponin-homology (CH) domains lie at 122–238, 266–377, 396–505, and 517–626; these read EEEK…KVGL, LSPE…NTYP, SKEE…RRYT, and KVND…GKGL.

Monomer. Post-translationally, phosphorylated.

Its subcellular location is the cytoplasm. The protein resides in the cell projection. It is found in the stereocilium. In terms of biological role, actin-bundling protein. In the inner ear, it is required for stereocilia formation. Mediates liquid packing of actin filaments that is necessary for stereocilia to grow to their proper dimensions. This Bos taurus (Bovine) protein is Plastin-1 (PLS1).